The sequence spans 493 residues: Proline--tRNA ligase (493 aa).

The protein belongs to the class-II aminoacyl-tRNA synthetase family. ProS type 3 subfamily. In terms of assembly, homodimer.

The protein localises to the cytoplasm. The catalysed reaction is tRNA(Pro) + L-proline + ATP = L-prolyl-tRNA(Pro) + AMP + diphosphate. Functionally, catalyzes the attachment of proline to tRNA(Pro) in a two-step reaction: proline is first activated by ATP to form Pro-AMP and then transferred to the acceptor end of tRNA(Pro). The polypeptide is Proline--tRNA ligase (Porphyromonas gingivalis (strain ATCC BAA-308 / W83)).